A 174-amino-acid chain; its full sequence is NADH-quinone oxidoreductase subunit I (174 aa).

2 4Fe-4S ferredoxin-type domains span residues 44 to 74 (LNRY…VEGD) and 90 to 119 (RVYQ…MTND). Residues Cys-54, Cys-57, Cys-60, Cys-64, Cys-99, Cys-102, Cys-105, and Cys-109 each contribute to the [4Fe-4S] cluster site.

Belongs to the complex I 23 kDa subunit family. As to quaternary structure, NDH-1 is composed of 14 different subunits. Subunits NuoA, H, J, K, L, M, N constitute the membrane sector of the complex. Requires [4Fe-4S] cluster as cofactor.

Its subcellular location is the cell membrane. It catalyses the reaction a quinone + NADH + 5 H(+)(in) = a quinol + NAD(+) + 4 H(+)(out). In terms of biological role, NDH-1 shuttles electrons from NADH, via FMN and iron-sulfur (Fe-S) centers, to quinones in the respiratory chain. The immediate electron acceptor for the enzyme in this species is believed to be menaquinone. Couples the redox reaction to proton translocation (for every two electrons transferred, four hydrogen ions are translocated across the cytoplasmic membrane), and thus conserves the redox energy in a proton gradient. The protein is NADH-quinone oxidoreductase subunit I of Mycobacterium sp. (strain KMS).